A 235-amino-acid chain; its full sequence is Phosphoglycolate phosphatase (235 aa).

Asp14 acts as the Nucleophile in catalysis. Mg(2+) is bound by residues Asp14, Asp16, and Asp177.

It belongs to the HAD-like hydrolase superfamily. CbbY/CbbZ/Gph/YieH family. Mg(2+) serves as cofactor.

It carries out the reaction 2-phosphoglycolate + H2O = glycolate + phosphate. Its pathway is organic acid metabolism; glycolate biosynthesis; glycolate from 2-phosphoglycolate: step 1/1. Its function is as follows. Specifically catalyzes the dephosphorylation of 2-phosphoglycolate. Is involved in the dissimilation of the intracellular 2-phosphoglycolate formed during the DNA repair of 3'-phosphoglycolate ends, a major class of DNA lesions induced by oxidative stress. The protein is Phosphoglycolate phosphatase of Neisseria meningitidis serogroup A / serotype 4A (strain DSM 15465 / Z2491).